Consider the following 364-residue polypeptide: Probable dual-specificity RNA methyltransferase RlmN (364 aa).

Glutamate 109 (proton acceptor) is an active-site residue. The Radical SAM core domain occupies 123 to 351 (PKARLTVCVS…VSVRYSRGLE (229 aa)). A disulfide bridge connects residues cysteine 130 and cysteine 356. 3 residues coordinate [4Fe-4S] cluster: cysteine 137, cysteine 141, and cysteine 144. S-adenosyl-L-methionine is bound by residues 184 to 185 (GE), serine 214, 237 to 239 (SLH), and asparagine 313. Catalysis depends on cysteine 356, which acts as the S-methylcysteine intermediate.

Belongs to the radical SAM superfamily. RlmN family. [4Fe-4S] cluster is required as a cofactor.

It is found in the cytoplasm. It carries out the reaction adenosine(2503) in 23S rRNA + 2 reduced [2Fe-2S]-[ferredoxin] + 2 S-adenosyl-L-methionine = 2-methyladenosine(2503) in 23S rRNA + 5'-deoxyadenosine + L-methionine + 2 oxidized [2Fe-2S]-[ferredoxin] + S-adenosyl-L-homocysteine. It catalyses the reaction adenosine(37) in tRNA + 2 reduced [2Fe-2S]-[ferredoxin] + 2 S-adenosyl-L-methionine = 2-methyladenosine(37) in tRNA + 5'-deoxyadenosine + L-methionine + 2 oxidized [2Fe-2S]-[ferredoxin] + S-adenosyl-L-homocysteine. Its function is as follows. Specifically methylates position 2 of adenine 2503 in 23S rRNA and position 2 of adenine 37 in tRNAs. This Nostoc punctiforme (strain ATCC 29133 / PCC 73102) protein is Probable dual-specificity RNA methyltransferase RlmN.